Consider the following 122-residue polypeptide: Large ribosomal subunit protein uL14 (122 aa).

It belongs to the universal ribosomal protein uL14 family. Part of the 50S ribosomal subunit. Forms a cluster with proteins L3 and L19. In the 70S ribosome, L14 and L19 interact and together make contacts with the 16S rRNA in bridges B5 and B8.

Its function is as follows. Binds to 23S rRNA. Forms part of two intersubunit bridges in the 70S ribosome. This Marinobacter nauticus (strain ATCC 700491 / DSM 11845 / VT8) (Marinobacter aquaeolei) protein is Large ribosomal subunit protein uL14.